We begin with the raw amino-acid sequence, 292 residues long: Protein/nucleic acid deglycase HchA (292 aa).

Residues 1 to 12 show a composition bias toward polar residues; it reads MSQDVNKLSKQP. The disordered stretch occupies residues 1 to 23; sequence MSQDVNKLSKQPTPDKAEDNAFF. The Nucleophile role is filled by cysteine 190.

This sequence belongs to the peptidase C56 family. HchA subfamily.

It is found in the cytoplasm. The enzyme catalyses N(omega)-(1-hydroxy-2-oxopropyl)-L-arginyl-[protein] + H2O = lactate + L-arginyl-[protein] + H(+). The catalysed reaction is N(6)-(1-hydroxy-2-oxopropyl)-L-lysyl-[protein] + H2O = lactate + L-lysyl-[protein] + H(+). It catalyses the reaction S-(1-hydroxy-2-oxopropyl)-L-cysteinyl-[protein] + H2O = lactate + L-cysteinyl-[protein] + H(+). It carries out the reaction N(omega)-(1-hydroxy-2-oxoethyl)-L-arginyl-[protein] + H2O = L-arginyl-[protein] + glycolate + H(+). The enzyme catalyses N(6)-(1-hydroxy-2-oxoethyl)-L-lysyl-[protein] + H2O = glycolate + L-lysyl-[protein] + H(+). The catalysed reaction is S-(1-hydroxy-2-oxoethyl)-L-cysteinyl-[protein] + H2O = glycolate + L-cysteinyl-[protein] + H(+). It catalyses the reaction N(2)-(1-hydroxy-2-oxopropyl)-dGTP + H2O = lactate + dGTP + H(+). It carries out the reaction N(2)-(1-hydroxy-2-oxopropyl)-GTP + H2O = lactate + GTP + H(+). The enzyme catalyses N(2)-(1-hydroxy-2-oxopropyl)-GDP + H2O = lactate + GDP + H(+). The catalysed reaction is N(2)-(1-hydroxy-2-oxopropyl)-GMP + H2O = lactate + GMP + H(+). It catalyses the reaction N(2)-(1-hydroxy-2-oxoethyl)-dGTP + H2O = dGTP + glycolate + H(+). It carries out the reaction N(2)-(1-hydroxy-2-oxoethyl)-GTP + H2O = glycolate + GTP + H(+). The enzyme catalyses N(2)-(1-hydroxy-2-oxoethyl)-GDP + H2O = glycolate + GDP + H(+). The catalysed reaction is N(2)-(1-hydroxy-2-oxoethyl)-GMP + H2O = glycolate + GMP + H(+). It catalyses the reaction an N(2)-(1-hydroxy-2-oxopropyl)-guanosine in RNA + H2O = a guanosine in RNA + lactate + H(+). It carries out the reaction an N(2)-(1-hydroxy-2-oxopropyl)-2'-deoxyguanosine in DNA + H2O = a 2'-deoxyguanosine in DNA + lactate + H(+). The enzyme catalyses an N(2)-(1-hydroxy-2-oxoethyl)-guanosine in RNA + H2O = a guanosine in RNA + glycolate + H(+). The catalysed reaction is an N(2)-(1-hydroxy-2-oxoethyl)-2'-deoxyguanosine in DNA + H2O = a 2'-deoxyguanosine in DNA + glycolate + H(+). Protein and nucleotide deglycase that catalyzes the deglycation of the Maillard adducts formed between amino groups of proteins or nucleotides and reactive carbonyl groups of glyoxals. Thus, functions as a protein deglycase that repairs methylglyoxal- and glyoxal-glycated proteins, and releases repaired proteins and lactate or glycolate, respectively. Deglycates cysteine, arginine and lysine residues in proteins, and thus reactivates these proteins by reversing glycation by glyoxals. Acts on early glycation intermediates (hemithioacetals and aminocarbinols), preventing the formation of Schiff bases and advanced glycation endproducts (AGE). Also functions as a nucleotide deglycase able to repair glycated guanine in the free nucleotide pool (GTP, GDP, GMP, dGTP) and in DNA and RNA. Is thus involved in a major nucleotide repair system named guanine glycation repair (GG repair), dedicated to reversing methylglyoxal and glyoxal damage via nucleotide sanitization and direct nucleic acid repair. Plays an important role in protecting cells from carbonyl stress. The chain is Protein/nucleic acid deglycase HchA from Staphylococcus aureus (strain MRSA252).